We begin with the raw amino-acid sequence, 656 residues long: Receptor-type tyrosine-protein phosphatase R (656 aa).

Residues 1-23 (MRRAVGFPALCLLLNLHAAGCFS) form the signal peptide. An O-linked (Xyl...) (chondroitin sulfate) serine glycan is attached at Ser-23. Residues 24–226 (RNNDHFLAIR…EADKIWSKEG (203 aa)) lie on the Extracellular side of the membrane. Asn-128 carries N-linked (GlcNAc...) asparagine glycosylation. The chain crosses the membrane as a helical span at residues 227–247 (FYAVVIFLSIFIIIVTCLMII). The Cytoplasmic segment spans residues 248 to 656 (YRLKERLQLS…ESRLSPETVE (409 aa)). The segment at 269 to 289 (HLSPIARQQAQSEAKTTHSMV) is disordered. Ser-271 carries the post-translational modification Phosphoserine. A compositionally biased stretch (polar residues) spans 274 to 289 (ARQQAQSEAKTTHSMV). Position 338 is a phosphoserine; by PKA (Ser-338). The Tyrosine-protein phosphatase domain occupies 392–646 (LQSEFMEIPM…EFVHHALCLF (255 aa)). Substrate contacts are provided by residues Asp-553, 587–593 (CSAGIGR), and Gln-631. Cys-587 acts as the Phosphocysteine intermediate in catalysis.

It belongs to the protein-tyrosine phosphatase family. Receptor class 7 subfamily. In terms of assembly, interacts with MAPKs. In terms of tissue distribution, expressed in the heart, brain, spleen, lung, liver, skeletal muscle, kidney and testis. Isoform alpha is expressed throughout the granular layer of the cerebellar but not within the Purkinje cells, also in the villi of the ileum and jejunum and both the villi and crypts of the duodenum. Isoform beta is expressed only in the Purkinje cells. Isoform gamma is expressed throughout the brain, the villi and crypts of the duodenum, jejunum and ileum and expressed at low levels in the proximal colon.

The protein resides in the cell membrane. The protein localises to the cytoplasm. The enzyme catalyses O-phospho-L-tyrosyl-[protein] + H2O = L-tyrosyl-[protein] + phosphate. Sequesters mitogen-activated protein kinases (MAPKs) such as MAPK1, MAPK3 and MAPK14 in the cytoplasm in an inactive form. The MAPKs bind to a dephosphorylated kinase interacting motif, phosphorylation of which by the protein kinase A complex releases the MAPKs for activation and translocation into the nucleus. Isoform gamma may have a role in patterning and cellular proliferation of skeletal elements in the precartilaginous/cartilaginous skeleton. This chain is Receptor-type tyrosine-protein phosphatase R (Ptprr), found in Mus musculus (Mouse).